The sequence spans 234 residues: DNA repair protein RecO (234 aa).

It belongs to the RecO family.

Functionally, involved in DNA repair and RecF pathway recombination. This chain is DNA repair protein RecO, found in Alteromonas mediterranea (strain DSM 17117 / CIP 110805 / LMG 28347 / Deep ecotype).